A 336-amino-acid polypeptide reads, in one-letter code: tRNA N6-adenosine threonylcarbamoyltransferase (336 aa).

Fe cation is bound by residues H114 and H118. Substrate-binding positions include 136 to 140 (LVSGG), D169, G182, D186, and N275. D302 lines the Fe cation pocket.

The protein belongs to the KAE1 / TsaD family. It depends on Fe(2+) as a cofactor.

The protein localises to the cytoplasm. The enzyme catalyses L-threonylcarbamoyladenylate + adenosine(37) in tRNA = N(6)-L-threonylcarbamoyladenosine(37) in tRNA + AMP + H(+). In terms of biological role, required for the formation of a threonylcarbamoyl group on adenosine at position 37 (t(6)A37) in tRNAs that read codons beginning with adenine. Is involved in the transfer of the threonylcarbamoyl moiety of threonylcarbamoyl-AMP (TC-AMP) to the N6 group of A37, together with TsaE and TsaB. TsaD likely plays a direct catalytic role in this reaction. This chain is tRNA N6-adenosine threonylcarbamoyltransferase, found in Streptococcus agalactiae serotype III (strain NEM316).